An 80-amino-acid polypeptide reads, in one-letter code: MNKALFLCLVVLCAAVVFAAEDLQKAKHAPFKRGAAGAAICICPDKVGRGDLWLFRGDCPGGYGYTSDCYVWPNICCYPH.

The N-terminal stretch at 1–19 (MNKALFLCLVVLCAAVVFA) is a signal peptide. Positions 20 to 31 (AEDLQKAKHAPF) are excised as a propeptide. 3 disulfide bridges follow: Cys-41/Cys-76, Cys-43/Cys-69, and Cys-59/Cys-77.

Belongs to the sea anemone type 3 (BDS) potassium channel toxin family. Moderately expressed in the ectodermal tissue from the distal and proximal tentacles, body wall, and oral disk.

It is found in the secreted. It localises to the nematocyst. Its function is as follows. Blocks Kv3 voltage-gated potassium channels. Reduces blood pressure. This chain is Kappa-actitoxin-Avd4f, found in Anemonia viridis (Snakelocks anemone).